A 174-amino-acid polypeptide reads, in one-letter code: CASP-like protein 4D2 (174 aa).

Over 1–14 the chain is Cytoplasmic; that stretch reads MAPPPPSPPPVSLK. A helical transmembrane segment spans residues 15–35; that stretch reads VSLLLLRVLTGVFLVIALIIL. Residues 36–60 are Extracellular-facing; that stretch reads STNSVTIVSQGSALKFHFKDVYAYR. Residues 61–81 form a helical membrane-spanning segment; sequence YMLSAAVIGLLYAVIQLFFTI. At 82–150 the chain is on the cytoplasmic side; that stretch reads SEFATGMKNP…FFSRGYASAS (69 aa). A helical transmembrane segment spans residues 151–171; that stretch reads LLLFSFICLAVLSVFSSLAIA. The Extracellular segment spans residues 172-174; sequence KRN.

This sequence belongs to the Casparian strip membrane proteins (CASP) family. In terms of assembly, homodimer and heterodimers.

The protein localises to the cell membrane. This is CASP-like protein 4D2 from Arabidopsis lyrata subsp. lyrata (Lyre-leaved rock-cress).